A 926-amino-acid chain; its full sequence is Serine/threonine-protein kinase pakE (926 aa).

The segment covering 36–55 (SSRELPTQDSSTKTSNITTP) has biased composition (polar residues). 2 disordered regions span residues 36 to 257 (SSRE…RPKL) and 546 to 576 (QLNN…TTTT). The span at 56–107 (NNNNNNNNNNNNNNNNNNNNNNNNNNNNNNNNNNNNNNNNNNNNNNNNNNNN) shows a compositional bias: low complexity. The segment covering 108-117 (TPTSLNSSWK) has biased composition (polar residues). Low complexity predominate over residues 134–173 (NNNNNVGSPNNQSTSQTNHQQPPPQQLQQQQSLSSTSTPS). Positions 183–204 (RRNVTSPNLTRSDPTVPITNSR) are enriched in polar residues. Residues 215 to 253 (PQFQLNNLNFDDNNDHSTTTTNNNNNNNNNNSNNNNNNN) are compositionally biased toward low complexity. Positions 534–567 (LDFEKELKENQQQLNNNNNNNNNNNNNNNNNNNN) form a coiled coil. A Protein kinase domain is found at 650–903 (FEFKEKLGQG…VIDLLSHDFI (254 aa)). ATP contacts are provided by residues 656-664 (LGQGGYGAV) and lysine 679. Aspartate 771 serves as the catalytic Proton acceptor.

The protein belongs to the protein kinase superfamily. STE Ser/Thr protein kinase family. STE20 subfamily. Mg(2+) is required as a cofactor.

The catalysed reaction is L-seryl-[protein] + ATP = O-phospho-L-seryl-[protein] + ADP + H(+). It catalyses the reaction L-threonyl-[protein] + ATP = O-phospho-L-threonyl-[protein] + ADP + H(+). In terms of biological role, may play a role in responding to changes in chemoattractant levels. This chain is Serine/threonine-protein kinase pakE, found in Dictyostelium discoideum (Social amoeba).